The primary structure comprises 332 residues: L-lactate dehydrogenase A chain (332 aa).

NAD(+) contacts are provided by residues Gly29–Lys57 and Arg99. Residues Arg106, Asn138, and Arg169 each contribute to the substrate site. Asn138 lines the NAD(+) pocket. His193 functions as the Proton acceptor in the catalytic mechanism. Thr248 contacts substrate.

The protein belongs to the LDH/MDH superfamily. LDH family. Homotetramer.

Its subcellular location is the cytoplasm. It carries out the reaction (S)-lactate + NAD(+) = pyruvate + NADH + H(+). The protein operates within fermentation; pyruvate fermentation to lactate; (S)-lactate from pyruvate: step 1/1. Interconverts simultaneously and stereospecifically pyruvate and lactate with concomitant interconversion of NADH and NAD(+). The chain is L-lactate dehydrogenase A chain (LDHA) from Pelodiscus sinensis japonicus (Chinese soft-shelled turtle).